The sequence spans 72 residues: Bowman-Birk type proteinase inhibitor (72 aa).

Cystine bridges form between Cys8/Cys61, Cys9/Cys24, Cys12/Cys57, Cys14/Cys22, Cys31/Cys38, Cys35/Cys50, and Cys40/Cys48.

The protein belongs to the Bowman-Birk serine protease inhibitor family.

Functionally, this inhibitor has two domains, each with separate antiprotease activity. 1 mole of inhibitor inhibits either 1 mole of trypsin or 2 moles of chymotrypsin, stoichiometrically. This is Bowman-Birk type proteinase inhibitor from Vicia sativa subsp. nigra (Common vetch).